The sequence spans 379 residues: Queuine tRNA-ribosyltransferase (379 aa).

The active-site Proton acceptor is the D89. Substrate is bound by residues D89–F93, D143, Q187, and G214. Positions G245–D251 are RNA binding. D264 functions as the Nucleophile in the catalytic mechanism. Residues T269–R273 are RNA binding; important for wobble base 34 recognition. Zn(2+) is bound by residues C302, C304, C307, and H333.

Belongs to the queuine tRNA-ribosyltransferase family. In terms of assembly, homodimer. Within each dimer, one monomer is responsible for RNA recognition and catalysis, while the other monomer binds to the replacement base PreQ1. Requires Zn(2+) as cofactor.

It carries out the reaction 7-aminomethyl-7-carbaguanine + guanosine(34) in tRNA = 7-aminomethyl-7-carbaguanosine(34) in tRNA + guanine. It functions in the pathway tRNA modification; tRNA-queuosine biosynthesis. Functionally, catalyzes the base-exchange of a guanine (G) residue with the queuine precursor 7-aminomethyl-7-deazaguanine (PreQ1) at position 34 (anticodon wobble position) in tRNAs with GU(N) anticodons (tRNA-Asp, -Asn, -His and -Tyr). Catalysis occurs through a double-displacement mechanism. The nucleophile active site attacks the C1' of nucleotide 34 to detach the guanine base from the RNA, forming a covalent enzyme-RNA intermediate. The proton acceptor active site deprotonates the incoming PreQ1, allowing a nucleophilic attack on the C1' of the ribose to form the product. After dissociation, two additional enzymatic reactions on the tRNA convert PreQ1 to queuine (Q), resulting in the hypermodified nucleoside queuosine (7-(((4,5-cis-dihydroxy-2-cyclopenten-1-yl)amino)methyl)-7-deazaguanosine). The protein is Queuine tRNA-ribosyltransferase of Edwardsiella ictaluri (strain 93-146).